The following is a 250-amino-acid chain: DNA polymerase sliding clamp (250 aa).

It belongs to the PCNA family. As to quaternary structure, homotrimer. The subunits circularize to form a toroid; DNA passes through its center. Replication factor C (RFC) is required to load the toroid on the DNA.

Functionally, sliding clamp subunit that acts as a moving platform for DNA processing. Responsible for tethering the catalytic subunit of DNA polymerase and other proteins to DNA during high-speed replication. This is DNA polymerase sliding clamp from Methanococcus maripaludis (strain C5 / ATCC BAA-1333).